Reading from the N-terminus, the 328-residue chain is MAQPYPPAQYPPPPQNGIPAEYAPPPPHPTPDYSGQTPVPPEHGMTLYTPAQTHPEQPSSDTSTQPITGAQTVPQTDEAAQTDSQPLHPSDPTEKQQPKRLHVSNIPFRFRDPDLRQMFGQFGKILDVEIIFNERGSKVNNATARVMTNKKTANPYTNGWKLNPVVGAVYGPEFYAVTGFPYPTTGTAVAYRGAHLRGRGRAVYNTFRAAPPPPPIPTYGAALEQTLVKMPVPWAGLAPCPLPPQQTPEPAYPTSPAFPPLSCPFASRVVYQDGFYGAEIYGGYAAYRYAQPAAAAAAYSDSYGRVYAAADPYHHTIGPAATYSIGTM.

Over residues 1 to 30 the composition is skewed to pro residues; that stretch reads MAQPYPPAQYPPPPQNGIPAEYAPPPPHPT. Positions 1-106 are disordered; sequence MAQPYPPAQY…QPKRLHVSNI (106 aa). The span at 49 to 87 shows a compositional bias: polar residues; the sequence is TPAQTHPEQPSSDTSTQPITGAQTVPQTDEAAQTDSQPL. In terms of domain architecture, RRM spans 99 to 172; it reads KRLHVSNIPF…NPVVGAVYGP (74 aa). Asymmetric dimethylarginine; alternate is present on Arg192. Position 192 is an omega-N-methylarginine; alternate (Arg192). Arg288 bears the Asymmetric dimethylarginine mark.

It localises to the nucleus. The protein localises to the cytoplasm. Functionally, pre-mRNA alternative splicing regulator. Regulates alternative splicing of RBFOX2 to enhance the production of mRNA species that are targeted for nonsense-mediated decay (NMD). In Bos taurus (Bovine), this protein is RNA binding protein fox-1 homolog 3 (RBFOX3).